Here is a 439-residue protein sequence, read N- to C-terminus: Ribosomal protein uS12 methylthiotransferase RimO (439 aa).

The region spanning 4 to 114 (PKVGFVSLGR…VVRAVHGVAP (111 aa)) is the MTTase N-terminal domain. In terms of domain architecture, Radical SAM core spans 133–370 (LTPRHYAYLK…MEHQQAISTA (238 aa)). [4Fe-4S] cluster is bound by residues Cys147, Cys151, and Cys154. A TRAM domain is found at 373 to 439 (STRVGREIDV…EYDLWGERIA (67 aa)).

Belongs to the methylthiotransferase family. RimO subfamily. Requires [4Fe-4S] cluster as cofactor.

The protein localises to the cytoplasm. It carries out the reaction L-aspartate(89)-[ribosomal protein uS12]-hydrogen + (sulfur carrier)-SH + AH2 + 2 S-adenosyl-L-methionine = 3-methylsulfanyl-L-aspartate(89)-[ribosomal protein uS12]-hydrogen + (sulfur carrier)-H + 5'-deoxyadenosine + L-methionine + A + S-adenosyl-L-homocysteine + 2 H(+). Functionally, catalyzes the methylthiolation of an aspartic acid residue of ribosomal protein uS12. The protein is Ribosomal protein uS12 methylthiotransferase RimO of Bordetella bronchiseptica (strain ATCC BAA-588 / NCTC 13252 / RB50) (Alcaligenes bronchisepticus).